Here is an 846-residue protein sequence, read N- to C-terminus: DNA mismatch repair protein MutS (846 aa).

Residue 610–617 (GPNMGGKS) participates in ATP binding.

The protein belongs to the DNA mismatch repair MutS family.

In terms of biological role, this protein is involved in the repair of mismatches in DNA. It is possible that it carries out the mismatch recognition step. This protein has a weak ATPase activity. The protein is DNA mismatch repair protein MutS of Legionella pneumophila (strain Corby).